The primary structure comprises 363 residues: Small ribosomal subunit biogenesis GTPase RsgA (363 aa).

Positions 112–268 constitute a CP-type G domain; sequence HQQVIAANID…LIDTPGMREL (157 aa). GTP-binding positions include 157-160 and 210-218; these read TKAD and GSSGAGKST. Residues Cys-291, Cys-296, His-298, and Cys-304 each contribute to the Zn(2+) site. The tract at residues 340–363 is disordered; the sequence is RVAQNNRGKGSGKRPASVDRPGRR.

The protein belongs to the TRAFAC class YlqF/YawG GTPase family. RsgA subfamily. In terms of assembly, monomer. Associates with 30S ribosomal subunit, binds 16S rRNA. The cofactor is Zn(2+).

The protein localises to the cytoplasm. In terms of biological role, one of several proteins that assist in the late maturation steps of the functional core of the 30S ribosomal subunit. Helps release RbfA from mature subunits. May play a role in the assembly of ribosomal proteins into the subunit. Circularly permuted GTPase that catalyzes slow GTP hydrolysis, GTPase activity is stimulated by the 30S ribosomal subunit. In Xanthomonas euvesicatoria pv. vesicatoria (strain 85-10) (Xanthomonas campestris pv. vesicatoria), this protein is Small ribosomal subunit biogenesis GTPase RsgA.